Consider the following 147-residue polypeptide: MRLTIVSVGHKMPDWVATATHDYIKRMPADCSIEIKEIKPDLTPAKEAVKIAAAIPKGSRVIALDERGKDQTTQHLATQLAGWRQEGFDITFLIGGADGLDPSLKTNAQAMWRLSSLTLPHAMARVLLVEQLYRAWTILQGHPYHRE.

Residues leucine 64, glycine 95, and 114 to 119 (LSSLTL) contribute to the S-adenosyl-L-methionine site.

Belongs to the RNA methyltransferase RlmH family. Homodimer.

The protein localises to the cytoplasm. It catalyses the reaction pseudouridine(1915) in 23S rRNA + S-adenosyl-L-methionine = N(3)-methylpseudouridine(1915) in 23S rRNA + S-adenosyl-L-homocysteine + H(+). In terms of biological role, specifically methylates the pseudouridine at position 1915 (m3Psi1915) in 23S rRNA. The sequence is that of Ribosomal RNA large subunit methyltransferase H from Polynucleobacter asymbioticus (strain DSM 18221 / CIP 109841 / QLW-P1DMWA-1) (Polynucleobacter necessarius subsp. asymbioticus).